The following is a 963-amino-acid chain: Pyruvate, phosphate dikinase 1, chloroplastic (963 aa).

The N-terminal 76 residues, 1 to 76 (MLYIRKKMTS…GLHRETKARA (76 aa)), are a transit peptide targeting the chloroplast. Thr543 is modified (phosphothreonine; by PDRP1). Catalysis depends on His545, which acts as the Tele-phosphohistidine intermediate. Arg651, Arg707, Glu836, Gly857, Thr858, Asn859, and Asp860 together coordinate substrate. Glu836 lines the Mg(2+) pocket. Asp860 is a binding site for Mg(2+). Residue Cys922 is the Proton donor of the active site.

It belongs to the PEP-utilizing enzyme family. In terms of assembly, homotetramer. Interacts with RP1 and RP2. The cofactor is Mg(2+). Post-translationally, phosphorylation of Thr-543 in the dark inactivates the enzyme. Dephosphorylation upon light stimulation reactivates the enzyme. In terms of tissue distribution, isoform 1 is expressed in leaves, flowers and siliques. Isoform 2 is found in cotyledons, rosette and cauline leaves, petioles, flowers and siliques.

The protein localises to the plastid. The protein resides in the chloroplast. It is found in the cytoplasm. The catalysed reaction is pyruvate + phosphate + ATP = phosphoenolpyruvate + AMP + diphosphate + H(+). With respect to regulation, activated by light-induced dephosphorylation. Inhibited by dark-induced phosphorylation. Both reactions are catalyzed by PDRP1. In terms of biological role, formation of phosphoenolpyruvate. May be involved in regulating the flux of carbon into starch and fatty acids of seeds and in the remobilization of nitrogen reserves in senescing leaves. This chain is Pyruvate, phosphate dikinase 1, chloroplastic (PPDK), found in Arabidopsis thaliana (Mouse-ear cress).